A 226-amino-acid chain; its full sequence is Adenosine 5'-phosphosulfate reductase (226 aa).

Positions 112, 113, 195, and 198 each coordinate [4Fe-4S] cluster. The active-site Nucleophile; cysteine thiosulfonate intermediate is C221.

The protein belongs to the PAPS reductase family. CysH subfamily. [4Fe-4S] cluster serves as cofactor.

It is found in the cytoplasm. The catalysed reaction is [thioredoxin]-disulfide + sulfite + AMP + 2 H(+) = adenosine 5'-phosphosulfate + [thioredoxin]-dithiol. It participates in sulfur metabolism; hydrogen sulfide biosynthesis; sulfite from sulfate. Its function is as follows. Catalyzes the formation of sulfite from adenosine 5'-phosphosulfate (APS) using thioredoxin as an electron donor. The chain is Adenosine 5'-phosphosulfate reductase from Bacillus anthracis (strain A0248).